A 274-amino-acid polypeptide reads, in one-letter code: 2,3,4,5-tetrahydropyridine-2,6-dicarboxylate N-succinyltransferase (274 aa).

This sequence belongs to the transferase hexapeptide repeat family.

The protein localises to the cytoplasm. The enzyme catalyses (S)-2,3,4,5-tetrahydrodipicolinate + succinyl-CoA + H2O = (S)-2-succinylamino-6-oxoheptanedioate + CoA. Its pathway is amino-acid biosynthesis; L-lysine biosynthesis via DAP pathway; LL-2,6-diaminopimelate from (S)-tetrahydrodipicolinate (succinylase route): step 1/3. This is 2,3,4,5-tetrahydropyridine-2,6-dicarboxylate N-succinyltransferase from Escherichia coli (strain SMS-3-5 / SECEC).